A 355-amino-acid polypeptide reads, in one-letter code: Olfactory receptor 1I1 (355 aa).

Topologically, residues 1-25 (MEPEKQTEISEFFLQGLSEKPEHQT) are extracellular. Residues 26–49 (LLFTMFLSTYLVTIIGNALIILAI) traverse the membrane as a helical segment. Topologically, residues 50 to 57 (ITDSHLHT) are cytoplasmic. Residues 58–79 (PMYFFLFNLSLVDTLLSSTTVP) form a helical membrane-spanning segment. Over 80-100 (KMLANIQAQSRAIPFVGCLTQ) the chain is Extracellular. The helical transmembrane segment at 101-120 (MYAFHLFGTMDSFLLAVMAI) threads the bilayer. The Cytoplasmic segment spans residues 121–139 (DRFVAIVHPQRYLVLMCSP). Residues 140–158 (VCGLLLGASWMITNLQSLI) traverse the membrane as a helical segment. Over 159–195 (HTCLMAQLTFCAGSEISHFFCDLMPLLKLSGSDTHTN) the chain is Extracellular. Residues 196–219 (ELVIFAFGIVVGTSPFSCILLSYI) traverse the membrane as a helical segment. Residues 220–236 (RIFWTVFKIPSTRGKWK) lie on the Cytoplasmic side of the membrane. The chain crosses the membrane as a helical span at residues 237 to 259 (AFSTCGLHLTVVSLSYGTIFAVY). The Extracellular segment spans residues 260–272 (LQPTSPSSSQKDK). A helical transmembrane segment spans residues 273 to 292 (AAALMCGVFIPMLNPFIYSI). Over 293–355 (RNKDMKAALG…QSLAGNRDME (63 aa)) the chain is Cytoplasmic.

Belongs to the G-protein coupled receptor 1 family.

It is found in the cell membrane. Odorant receptor. The polypeptide is Olfactory receptor 1I1 (OR1I1) (Homo sapiens (Human)).